Consider the following 233-residue polypeptide: Gamma-glutamyl-hercynylcysteine sulfoxide hydrolase (233 aa).

The active-site Nucleophile is the C2. One can recognise a Glutamine amidotransferase type-2 domain in the interval 2-233 (CRHLGWLGAQ…TALDRAKGPR (232 aa)).

It carries out the reaction gamma-L-glutamyl-hercynylcysteine S-oxide + H2O = S-(hercyn-2-yl)-L-cysteine S-oxide + L-glutamate. The protein operates within amino-acid biosynthesis; ergothioneine biosynthesis. Its function is as follows. Catalyzes the hydrolysis of the gamma-glutamyl amide bond of hercynyl-gamma-L-glutamyl-L-cysteine sulfoxide to produce hercynylcysteine sulfoxide, a step in the biosynthesis pathway of ergothioneine. ERG is one of the major redox buffers which protects bacteria against redox stressors and antibiotics; loss of ERG or mycothiol (MSH, the other major redox buffer in this bacteria) leads to respiratory alterations and bioenergetic deficiencies that negatively impact virulence. In Mycobacterium tuberculosis (strain CDC 1551 / Oshkosh), this protein is Gamma-glutamyl-hercynylcysteine sulfoxide hydrolase.